The sequence spans 382 residues: F-box protein At3g27290 (382 aa).

An F-box domain is found at 16-105; it reads RKLELGLGEF…VDQMLFETLS (90 aa).

The sequence is that of F-box protein At3g27290 from Arabidopsis thaliana (Mouse-ear cress).